We begin with the raw amino-acid sequence, 230 residues long: Somatolactin (230 aa).

Positions 1-25 are cleaved as a signal peptide; it reads MHTKVLQQGLWALLLWPHLFTVSVP. 3 cysteine pairs are disulfide-bonded: cysteine 28–cysteine 38, cysteine 88–cysteine 204, and cysteine 221–cysteine 229. N-linked (GlcNAc...) asparagine glycosylation is present at asparagine 144.

This sequence belongs to the somatotropin/prolactin family.

The protein localises to the secreted. Its function is as follows. Selectively regulates proliferation and morphogenesis of neural-crest derived pigment cells. This Oryzias latipes (Japanese rice fish) protein is Somatolactin.